Here is a 102-residue protein sequence, read N- to C-terminus: NADH-quinone oxidoreductase subunit K (102 aa).

The next 3 membrane-spanning stretches (helical) occupy residues 6-26, 30-50, and 63-83; these read LIAM…GVLA, IMFQ…GFVA, and MFIL…ALFL.

It belongs to the complex I subunit 4L family. In terms of assembly, NDH-1 is composed of 14 different subunits. Subunits NuoA, H, J, K, L, M, N constitute the membrane sector of the complex.

It is found in the cell inner membrane. The catalysed reaction is a quinone + NADH + 5 H(+)(in) = a quinol + NAD(+) + 4 H(+)(out). Functionally, NDH-1 shuttles electrons from NADH, via FMN and iron-sulfur (Fe-S) centers, to quinones in the respiratory chain. The immediate electron acceptor for the enzyme in this species is believed to be ubiquinone. Couples the redox reaction to proton translocation (for every two electrons transferred, four hydrogen ions are translocated across the cytoplasmic membrane), and thus conserves the redox energy in a proton gradient. This is NADH-quinone oxidoreductase subunit K from Rhodopseudomonas palustris (strain BisB5).